We begin with the raw amino-acid sequence, 172 residues long: Large ribosomal subunit protein uL10 (172 aa).

Belongs to the universal ribosomal protein uL10 family. Part of the ribosomal stalk of the 50S ribosomal subunit. The N-terminus interacts with L11 and the large rRNA to form the base of the stalk. The C-terminus forms an elongated spine to which L12 dimers bind in a sequential fashion forming a multimeric L10(L12)X complex.

Its function is as follows. Forms part of the ribosomal stalk, playing a central role in the interaction of the ribosome with GTP-bound translation factors. This Rhizobium meliloti (strain 1021) (Ensifer meliloti) protein is Large ribosomal subunit protein uL10.